The primary structure comprises 244 residues: Probable transcriptional regulatory protein CHAB381_1426 (244 aa).

The protein belongs to the TACO1 family.

It is found in the cytoplasm. This is Probable transcriptional regulatory protein CHAB381_1426 from Campylobacter hominis (strain ATCC BAA-381 / DSM 21671 / CCUG 45161 / LMG 19568 / NCTC 13146 / CH001A).